The primary structure comprises 59 residues: Large ribosomal subunit protein uL30 (59 aa).

This sequence belongs to the universal ribosomal protein uL30 family. Part of the 50S ribosomal subunit.

This chain is Large ribosomal subunit protein uL30, found in Pelotomaculum thermopropionicum (strain DSM 13744 / JCM 10971 / SI).